The chain runs to 243 residues: UPF0246 protein SEQ_2141 (243 aa).

This sequence belongs to the UPF0246 family.

The protein is UPF0246 protein SEQ_2141 of Streptococcus equi subsp. equi (strain 4047).